The primary structure comprises 605 residues: Mini-chromosome maintenance complex-binding protein (605 aa).

Ser-147 and Ser-150 each carry phosphoserine.

The protein belongs to the MCMBP family. In terms of assembly, interacts with the MCM complex.

The protein localises to the nucleus. Functionally, associated component of the MCM complex that acts as a regulator of DNA replication. Binds to the MCM complex during late S phase and may act by promoting the disassembly of the MCM complex from chromatin. The polypeptide is Mini-chromosome maintenance complex-binding protein (Drosophila melanogaster (Fruit fly)).